We begin with the raw amino-acid sequence, 404 residues long: Corticosteroid-binding globulin (404 aa).

The signal sequence occupies residues 1-22 (MLPTLYTCLLWLSTSGLWTVQA). 3 N-linked (GlcNAc...) asparagine glycosylation sites follow: Asn95, Asn119, and Asn175. Gln253 lines the cortisol pocket. The N-linked (GlcNAc...) asparagine glycan is linked to Asn259. Gln285 provides a ligand contact to cortisol. Asn326 is a glycosylation site (N-linked (GlcNAc...) asparagine). Trp392 serves as a coordination point for cortisol.

Belongs to the serpin family. Glycosylation in position Asn-259 is needed for steroid binding.

The protein resides in the secreted. Its function is as follows. Major transport protein for glucocorticoids and progestins in the blood of almost all vertebrate species. The chain is Corticosteroid-binding globulin (SERPINA6) from Bos taurus (Bovine).